The sequence spans 122 residues: Large ribosomal subunit protein uL14 (122 aa).

It belongs to the universal ribosomal protein uL14 family. Part of the 50S ribosomal subunit. Forms a cluster with proteins L3 and L19. In the 70S ribosome, L14 and L19 interact and together make contacts with the 16S rRNA in bridges B5 and B8.

Functionally, binds to 23S rRNA. Forms part of two intersubunit bridges in the 70S ribosome. The polypeptide is Large ribosomal subunit protein uL14 (Rhodopseudomonas palustris (strain HaA2)).